Consider the following 277-residue polypeptide: Ribosomal RNA small subunit methyltransferase G (277 aa).

S-adenosyl-L-methionine-binding positions include glycine 128, phenylalanine 133, 188–189, and arginine 198; that span reads SE.

It belongs to the methyltransferase superfamily. RNA methyltransferase RsmG family.

It is found in the cytoplasm. The enzyme catalyses guanosine(527) in 16S rRNA + S-adenosyl-L-methionine = N(7)-methylguanosine(527) in 16S rRNA + S-adenosyl-L-homocysteine. In terms of biological role, specifically methylates the N7 position of guanine in position 527 of 16S rRNA. The protein is Ribosomal RNA small subunit methyltransferase G of Nitrobacter winogradskyi (strain ATCC 25391 / DSM 10237 / CIP 104748 / NCIMB 11846 / Nb-255).